The chain runs to 219 residues: MDTWHDALGGEKQQPYFQEILNAVRQERLSGQIIYPPAADVFNAFRLTAFDRVKAVILGQDPYHGAGQAHGLAFSVRQGIRIPPSLLNIYKELETDIEGFSIPAHGCLTAWAEQGVLLLNTVLTVRAGQAHSHALLGWERFTDTVIRQLAAHRKHLVFMLWGGYAQQKRKLIDSQNHLILTAPHPSPLSAYRGFFGCRHFSQANSYLSRHGIDPINWKL.

D61 serves as the catalytic Proton acceptor.

It belongs to the uracil-DNA glycosylase (UDG) superfamily. UNG family.

Its subcellular location is the cytoplasm. The catalysed reaction is Hydrolyzes single-stranded DNA or mismatched double-stranded DNA and polynucleotides, releasing free uracil.. Excises uracil residues from the DNA which can arise as a result of misincorporation of dUMP residues by DNA polymerase or due to deamination of cytosine. The sequence is that of Uracil-DNA glycosylase from Neisseria meningitidis serogroup C (strain 053442).